A 447-amino-acid chain; its full sequence is Protein mab-21-like 4 (447 aa).

In Homo sapiens (Human), this protein is Protein mab-21-like 4.